Reading from the N-terminus, the 694-residue chain is Rabphilin-3A (694 aa).

Polar residues predominate over residues 1-12 (MTDTVFSNSSNR). A disordered region spans residues 1-51 (MTDTVFSNSSNRWMYPSDRPLQSNDKEQLQAGWSVHPGGQPDRQRKQEELT). Residues 44–160 (QRKQEELTDE…KRSGAWFFKG (117 aa)) enclose the RabBD domain. The segment at 92-148 (GDGVNRCILCGEQLGMLGSACVVCEDCKKNVCTKCGVETNNRLHSVWLCKICIEQRE) adopts an FYVE-type zinc-finger fold. Residues Cys-98, Cys-101, Cys-115, Cys-118, Cys-123, Cys-126, Cys-140, and Cys-143 each contribute to the Zn(2+) site. Residues 166–388 (LPQPMPIKKT…EEEANSYDSD (223 aa)) form a disordered region. Residues 177–186 (PQQPVSEPAA) show a composition bias toward low complexity. The segment covering 202-211 (ARGDSEDRRG) has biased composition (basic and acidic residues). At Arg-226 the chain carries Omega-N-methylarginine. Position 272 is a phosphoserine (Ser-272). Positions 352–370 (PSGPYSQASAAAPQPAAAR) are enriched in low complexity. Over residues 375 to 388 (PEEEEEEANSYDSD) the composition is skewed to acidic residues. The C2 1 domain maps to 392–514 (TLGALEFSLL…KPNQRKNFNI (123 aa)). 14 residues coordinate Ca(2+): Met-422, Asp-423, Asp-429, Asp-484, Glu-485, Asp-486, Glu-492, Glu-539, Asp-581, Asp-587, Asp-641, Tyr-642, Asp-643, and Asp-649. Residues 550-683 (ERGKILVSLM…NKDKKIERWH (134 aa)) form the C2 2 domain. Residues Ser-692 and Ser-693 each carry the phosphoserine modification.

Interacts with RAB3B, RAB3C, RAB3D, RAB8A, RAB27A and RAB27B. Interacts with RAB3A; this interaction recruits RPH3A to synaptic vesicules. Interacts (via C2B domain) with SNAP25. Interacts with deubiquitinating enzyme CAND1; this interaction results in the deubiquitination of RPH3A. Interacts with GRIN2A and DLG4; this ternary complex regulates NMDA receptor composition at postsynaptic membranes. Interacts with SNCA. Requires Ca(2+) as cofactor. Ubiquitinated. Deubiquitinated by CAND1 to prevent its degradation.

It is found in the cytoplasmic vesicle. The protein localises to the secretory vesicle. The protein resides in the synaptic vesicle membrane. Its subcellular location is the cell projection. It localises to the dendritic spine. It is found in the postsynaptic cell membrane. The protein localises to the membrane. Functionally, plays an essential role in docking and fusion steps of regulated exocytosis. At the presynaptic level, RPH3A is recruited by RAB3A to the synaptic vesicle membrane in a GTP-dependent manner where it modulates synaptic vesicle trafficking and calcium-triggered neurotransmitter release. In the post-synaptic compartment, forms a ternary complex with GRIN2A and DLG4 and regulates NMDA receptor stability. Also plays a role in the exocytosis of arginine vasopressin hormone. The protein is Rabphilin-3A (RPH3A) of Homo sapiens (Human).